The chain runs to 295 residues: Probable ketoamine kinase slr1563 (295 aa).

Glu99–Leu101 contributes to the ATP binding site. The active-site Proton acceptor is the Asp201.

The protein belongs to the fructosamine kinase family.

Ketoamine kinase that phosphorylates ketoamines on the third carbon of the sugar moiety to generate ketoamine 3-phosphate. This is Probable ketoamine kinase slr1563 from Synechocystis sp. (strain ATCC 27184 / PCC 6803 / Kazusa).